We begin with the raw amino-acid sequence, 207 residues long: Probable molybdenum cofactor guanylyltransferase (207 aa).

GTP is bound by residues 9–11 (LAG), Lys-21, and Asp-97. Mg(2+) is bound at residue Asp-97.

It belongs to the MobA family. It depends on Mg(2+) as a cofactor.

It is found in the cytoplasm. The catalysed reaction is Mo-molybdopterin + GTP + H(+) = Mo-molybdopterin guanine dinucleotide + diphosphate. Transfers a GMP moiety from GTP to Mo-molybdopterin (Mo-MPT) cofactor (Moco or molybdenum cofactor) to form Mo-molybdopterin guanine dinucleotide (Mo-MGD) cofactor. The chain is Probable molybdenum cofactor guanylyltransferase from Trichormus variabilis (strain ATCC 29413 / PCC 7937) (Anabaena variabilis).